A 385-amino-acid polypeptide reads, in one-letter code: MNPVPAQREYFLDSIRAWLMLLGIPFHISLIYSSHTWHVNSAEPSLWLTLFNDFIHSFRMLVFFVISGYFSYMLFLRYPLKKWWKVRVERVGIPMLTAIPLLTLPQFIMLQYVKGKAESWPGLSLYDKYNTLAWELISHLWFLLVLVVMTTLCVWIFKRIRNNLENSDKTNKKFSMVKLSVIFLCLGIGYAVIRRTIFIVYPPILSNGMFNFIVMQTLFYLPFFILGALAFIFPHLKALFTTPSRGCTLAAALAFVAYLLNQRYGSGDAWMYETESVITMVLGLWMVNVVFSFGHRLLNFQSARVTYFVNASLFIYLVHHPLTLFFGAYITPHITSNWLGFLCGLIFVVGIAIILYEIHLRIPLLKFLFSGKPVVKRENDKAPAR.

The next 10 helical transmembrane spans lie at 17–37 (AWLM…SHTW), 60–80 (MLVF…RYPL), 91–111 (VGIP…IMLQ), 137–157 (ISHL…VWIF), 173–193 (KFSM…YAVI), 212–232 (FIVM…LAFI), 239–259 (LFTT…VAYL), 274–294 (TESV…FSFG), 311–331 (ASLF…AYIT), and 338–358 (WLGF…LYEI).

The protein belongs to the acyltransferase 3 family. OpgC subfamily.

The protein localises to the cell membrane. The protein operates within glycan metabolism; osmoregulated periplasmic glucan (OPG) biosynthesis. Necessary for the succinyl substitution of periplasmic glucans. Could catalyze the transfer of succinyl residues from the cytoplasmic side of the membrane to the nascent glucan backbones on the periplasmic side of the membrane. The sequence is that of Glucans biosynthesis protein C from Shigella boydii serotype 4 (strain Sb227).